The sequence spans 383 residues: S-adenosylmethionine synthase (383 aa).

His-15 serves as a coordination point for ATP. Residue Asp-17 participates in Mg(2+) binding. Glu-43 is a binding site for K(+). L-methionine-binding residues include Glu-56 and Gln-99. Residues 99 to 109 (QSQDINQGVDR) are flexible loop. ATP-binding positions include 164–166 (DAK), 230–231 (RF), Asp-239, 245–246 (RK), Ala-262, and Lys-266. Asp-239 provides a ligand contact to L-methionine. Lys-270 is a binding site for L-methionine.

Belongs to the AdoMet synthase family. In terms of assembly, homotetramer; dimer of dimers. It depends on Mg(2+) as a cofactor. K(+) is required as a cofactor.

It localises to the cytoplasm. It catalyses the reaction L-methionine + ATP + H2O = S-adenosyl-L-methionine + phosphate + diphosphate. The protein operates within amino-acid biosynthesis; S-adenosyl-L-methionine biosynthesis; S-adenosyl-L-methionine from L-methionine: step 1/1. Its function is as follows. Catalyzes the formation of S-adenosylmethionine (AdoMet) from methionine and ATP. The overall synthetic reaction is composed of two sequential steps, AdoMet formation and the subsequent tripolyphosphate hydrolysis which occurs prior to release of AdoMet from the enzyme. The protein is S-adenosylmethionine synthase of Actinobacillus succinogenes (strain ATCC 55618 / DSM 22257 / CCUG 43843 / 130Z).